A 363-amino-acid chain; its full sequence is Protein Wnt-5b (363 aa).

The signal sequence occupies residues 1–21 (MDVRMNQGHLLLAVTLIVCNS). A disulfide bridge connects residues cysteine 87 and cysteine 98. 2 N-linked (GlcNAc...) asparagine glycosylation sites follow: asparagine 97 and asparagine 103. Cystine bridges form between cysteine 137/cysteine 145, cysteine 147/cysteine 165, cysteine 221/cysteine 235, cysteine 223/cysteine 230, cysteine 292/cysteine 323, cysteine 308/cysteine 318, cysteine 322/cysteine 362, cysteine 338/cysteine 353, cysteine 340/cysteine 350, and cysteine 345/cysteine 346. The O-palmitoleoyl serine; by PORCN moiety is linked to residue serine 227. Asparagine 295 and asparagine 309 each carry an N-linked (GlcNAc...) asparagine glycan.

It belongs to the Wnt family. Palmitoleoylation is required for efficient binding to frizzled receptors. Depalmitoleoylation leads to Wnt signaling pathway inhibition.

Its subcellular location is the secreted. The protein resides in the extracellular space. It localises to the extracellular matrix. Its function is as follows. Ligand for members of the frizzled family of seven transmembrane receptors. Can activate or inhibit canonical Wnt signaling, depending on receptor context. Required during embryogenesis for extension of the primary anterior-posterior axis. Regulates convergent extension movements and hypaxial myogenesis during gastrulation via activation of non-canonical Wnt signaling. The sequence is that of Protein Wnt-5b (wnt5b) from Danio rerio (Zebrafish).